The primary structure comprises 172 residues: Putative defense protein (172 aa).

The first 21 residues, 1–21 (MKLVVAAVLAMAASRWRRLSA), serve as a signal peptide directing secretion. Residues 22–172 (HGQVPSSTCA…LRQLDNAVAA (151 aa)) enclose the Reelin domain.

The protein belongs to the insect defense protein family. In adults, in hemolymph.

It localises to the secreted. Its function is as follows. May have antimicrobial activity. This chain is Putative defense protein, found in Locusta migratoria (Migratory locust).